A 345-amino-acid chain; its full sequence is RNA pseudouridine synthase 1 (345 aa).

Asp134 is an active-site residue.

It belongs to the pseudouridine synthase RluA family.

The catalysed reaction is a uridine in RNA = a pseudouridine in RNA. The polypeptide is RNA pseudouridine synthase 1 (Oryza sativa subsp. japonica (Rice)).